A 207-amino-acid chain; its full sequence is dTTP/UTP pyrophosphatase (207 aa).

The Proton acceptor role is filled by D79.

The protein belongs to the Maf family. YhdE subfamily. The cofactor is a divalent metal cation.

The protein resides in the cytoplasm. The catalysed reaction is dTTP + H2O = dTMP + diphosphate + H(+). It catalyses the reaction UTP + H2O = UMP + diphosphate + H(+). In terms of biological role, nucleoside triphosphate pyrophosphatase that hydrolyzes dTTP and UTP. May have a dual role in cell division arrest and in preventing the incorporation of modified nucleotides into cellular nucleic acids. The protein is dTTP/UTP pyrophosphatase of Rhodopseudomonas palustris (strain BisB18).